The following is an 876-amino-acid chain: Valine--tRNA ligase (876 aa).

The 'HIGH' region signature appears at 44 to 54 (PNVTGKLHLGH). A 'KMSKS' region motif is present at residues 520–524 (KMSKS). K523 provides a ligand contact to ATP. Positions 805–876 (LEGLIDMDKE…VKARIEQLKA (72 aa)) form a coiled coil.

This sequence belongs to the class-I aminoacyl-tRNA synthetase family. ValS type 1 subfamily. Monomer.

Its subcellular location is the cytoplasm. It carries out the reaction tRNA(Val) + L-valine + ATP = L-valyl-tRNA(Val) + AMP + diphosphate. In terms of biological role, catalyzes the attachment of valine to tRNA(Val). As ValRS can inadvertently accommodate and process structurally similar amino acids such as threonine, to avoid such errors, it has a 'posttransfer' editing activity that hydrolyzes mischarged Thr-tRNA(Val) in a tRNA-dependent manner. The chain is Valine--tRNA ligase from Staphylococcus aureus (strain JH1).